A 134-amino-acid chain; its full sequence is D-ribose pyranase (134 aa).

The active-site Proton donor is His-20. Substrate contacts are provided by residues Asp-28, His-101, and 123-125 (YSN).

It belongs to the RbsD / FucU family. RbsD subfamily. Homodecamer.

It localises to the cytoplasm. The catalysed reaction is beta-D-ribopyranose = beta-D-ribofuranose. It functions in the pathway carbohydrate metabolism; D-ribose degradation; D-ribose 5-phosphate from beta-D-ribopyranose: step 1/2. Catalyzes the interconversion of beta-pyran and beta-furan forms of D-ribose. This Pseudomonas syringae pv. tomato (strain ATCC BAA-871 / DC3000) protein is D-ribose pyranase.